Here is a 989-residue protein sequence, read N- to C-terminus: ATP-dependent 6-phosphofructokinase subunit alpha (989 aa).

Residues 1–585 (MPEPSISDLS…SYENFLSVSK (585 aa)) are N-terminal catalytic PFK domain 1. Residues Gly-220, 283–284 (RC), and 313–316 (GDGS) contribute to the ATP site. Asp-314 contacts Mg(2+). Residues 359 to 361 (SID), Arg-396, 403 to 405 (MGR), Glu-460, Arg-487, and 493 to 496 (HVQR) each bind beta-D-fructose 6-phosphate. Catalysis depends on Asp-361, which acts as the Proton acceptor. Residues 586-599 (YDDGSYLVPESSRL) form an interdomain linker region. The segment at 600–989 (NIAIIHVGAP…LSGRLSIRTT (390 aa)) is C-terminal regulatory PFK domain 2. Beta-D-fructose 2,6-bisphosphate contacts are provided by residues Arg-670, 727-731 (TVSNN), Arg-765, 772-774 (QGG), Glu-832, Arg-858, 864-867 (HVQQ), and Arg-963.

Belongs to the phosphofructokinase type A (PFKA) family. ATP-dependent PFK group I subfamily. Eukaryotic two domain clade 'E' sub-subfamily. As to quaternary structure, heterododecamer of 4 alpha, 4 beta and 4 gamma chains. Requires Mg(2+) as cofactor.

Its subcellular location is the cytoplasm. It carries out the reaction beta-D-fructose 6-phosphate + ATP = beta-D-fructose 1,6-bisphosphate + ADP + H(+). It participates in carbohydrate degradation; glycolysis; D-glyceraldehyde 3-phosphate and glycerone phosphate from D-glucose: step 3/4. Allosterically activated by ADP, AMP, or fructose 2,6-bisphosphate, and allosterically inhibited by ATP or citrate. Its function is as follows. Catalyzes the phosphorylation of D-fructose 6-phosphate to fructose 1,6-bisphosphate by ATP, the first committing step of glycolysis. The sequence is that of ATP-dependent 6-phosphofructokinase subunit alpha (PFK1) from Komagataella pastoris (Yeast).